A 125-amino-acid chain; its full sequence is Small ribosomal subunit protein bS6 (125 aa).

The segment at 101-125 is disordered; sequence PMMKEEKAKNLLAPQSDAAEPTAAA.

This sequence belongs to the bacterial ribosomal protein bS6 family.

Its function is as follows. Binds together with bS18 to 16S ribosomal RNA. This chain is Small ribosomal subunit protein bS6, found in Laribacter hongkongensis (strain HLHK9).